The chain runs to 469 residues: Dihydroorotate dehydrogenase (quinone), mitochondrial (469 aa).

The transit peptide at 1-37 (MSSSAAALAWRRSLRDALLRGSAWRGAPAANSAAARL) directs the protein to the mitochondrion. Residues 62 to 82 (LLTGAMIGLAIAGGAYVSTAD) form a helical membrane-spanning segment. FMN-binding positions include 150-154 (AGFDK) and Ser-174. Lys-154 lines the substrate pocket. Position 199–203 (199–203 (NRCGF)) interacts with substrate. Positions 219–247 (HGKRKMEETSSSTSPTTSDVKQGGKAGPG) are disordered. A compositionally biased stretch (low complexity) spans 227 to 236 (TSSSTSPTTS). Residues Asn-252 and Asn-283 each contribute to the FMN site. Substrate is bound at residue 283 to 288 (NVSSPN). Ser-286 serves as the catalytic Nucleophile. Residues Lys-328 and Ser-356 each coordinate FMN. Substrate is bound at residue 357–358 (NT). FMN is bound by residues Gly-380, Gly-409, and 430-431 (YT).

This sequence belongs to the dihydroorotate dehydrogenase family. Type 2 subfamily. The cofactor is FMN.

It is found in the mitochondrion inner membrane. It catalyses the reaction (S)-dihydroorotate + a quinone = orotate + a quinol. The protein operates within pyrimidine metabolism; UMP biosynthesis via de novo pathway; orotate from (S)-dihydroorotate (quinone route): step 1/1. Catalyzes the conversion of dihydroorotate to orotate with quinone as electron acceptor. This Oryza sativa subsp. japonica (Rice) protein is Dihydroorotate dehydrogenase (quinone), mitochondrial (PYRD).